Here is a 261-residue protein sequence, read N- to C-terminus: Orotidine 5'-phosphate decarboxylase (261 aa).

Residues aspartate 34, 56 to 58 (KTH), 88 to 97 (DRKFADIGNT), tyrosine 214, and arginine 232 contribute to the substrate site. The active-site Proton donor is lysine 90.

This sequence belongs to the OMP decarboxylase family.

It catalyses the reaction orotidine 5'-phosphate + H(+) = UMP + CO2. It participates in pyrimidine metabolism; UMP biosynthesis via de novo pathway; UMP from orotate: step 2/2. This is Orotidine 5'-phosphate decarboxylase (URA3) from Kodamaea ohmeri (Yeast).